The chain runs to 474 residues: Nitrogenase vanadium-iron protein alpha chain (474 aa).

Cys-49, Cys-75, and Cys-138 together coordinate [8Fe-7S] cluster. Cys-257 and His-423 together coordinate [7Fe-V-9S-C-homocitryl] cluster.

Belongs to the NifD/NifK/NifE/NifN family. Hexamer of two alpha, two beta, and two delta chains. The cofactor is [8Fe-7S] cluster. It depends on [7Fe-V-9S-C-homocitryl] cluster as a cofactor.

The catalysed reaction is N2 + 8 reduced [2Fe-2S]-[ferredoxin] + 16 ATP + 16 H2O = H2 + 8 oxidized [2Fe-2S]-[ferredoxin] + 2 NH4(+) + 16 ADP + 16 phosphate + 6 H(+). Functionally, this vanadium-iron protein is part of the nitrogenase complex that catalyzes the key enzymatic reactions in nitrogen fixation. This is Nitrogenase vanadium-iron protein alpha chain (vnfD) from Azotobacter vinelandii.